Reading from the N-terminus, the 75-residue chain is Insecticidal toxin OcyC10 (75 aa).

Residues 1–19 (MNFATKIVILLLVAALILA) form the signal peptide. Cystine bridges form between Cys50–Cys62 and Cys56–Cys68.

In terms of tissue distribution, expressed by the venom gland.

The protein resides in the secreted. Functionally, insecticidal toxin. This is Insecticidal toxin OcyC10 from Opisthacanthus cayaporum (South American scorpion).